The following is a 395-amino-acid chain: NAD(P)H-quinone oxidoreductase subunit H (395 aa).

It belongs to the complex I 49 kDa subunit family. NDH-1 can be composed of about 15 different subunits; different subcomplexes with different compositions have been identified which probably have different functions.

The protein localises to the cellular thylakoid membrane. The catalysed reaction is a plastoquinone + NADH + (n+1) H(+)(in) = a plastoquinol + NAD(+) + n H(+)(out). It carries out the reaction a plastoquinone + NADPH + (n+1) H(+)(in) = a plastoquinol + NADP(+) + n H(+)(out). Functionally, NDH-1 shuttles electrons from an unknown electron donor, via FMN and iron-sulfur (Fe-S) centers, to quinones in the respiratory and/or the photosynthetic chain. The immediate electron acceptor for the enzyme in this species is believed to be plastoquinone. Couples the redox reaction to proton translocation, and thus conserves the redox energy in a proton gradient. Cyanobacterial NDH-1 also plays a role in inorganic carbon-concentration. This chain is NAD(P)H-quinone oxidoreductase subunit H, found in Prochlorococcus marinus (strain MIT 9301).